Here is a 91-residue protein sequence, read N- to C-terminus: Large ribosomal subunit protein eL34 (91 aa).

This sequence belongs to the eukaryotic ribosomal protein eL34 family.

The protein is Large ribosomal subunit protein eL34 of Thermofilum pendens (strain DSM 2475 / Hrk 5).